A 530-amino-acid polypeptide reads, in one-letter code: Tryptophan 7-halogenase RebH (530 aa).

FAD contacts are provided by Gly13, Thr15, Ala16, Ala39, Asp41, Glu49, and Ala50. Residue Lys79 is part of the active site. 2 residues coordinate FAD: Val197 and Thr348. Glu357 serves as a coordination point for L-tryptophan. Positions 359 and 360 each coordinate chloride. An FAD-binding site is contributed by Ile361. L-tryptophan contacts are provided by Tyr454, Tyr455, Glu461, and Phe465.

It belongs to the flavin-dependent halogenase family. Bacterial tryptophan halogenase subfamily. In terms of assembly, homodimer.

The enzyme catalyses L-tryptophan + FADH2 + chloride + O2 = 7-chloro-L-tryptophan + FAD + 2 H2O. Its function is as follows. Involved in the biosynthesis of the indolocarbazole antitumor agent rebeccamycin. Catalyzes the chlorination of tryptophan (Trp) at C7 position to yield 7-chlorotryptophan. It is also able to use bromide ions to generate monobrominated Trp. In Lentzea aerocolonigenes (Lechevalieria aerocolonigenes), this protein is Tryptophan 7-halogenase RebH (rebH).